Reading from the N-terminus, the 713-residue chain is Nucleoporin NUP82 (713 aa).

Residues 1-409 (MSQSSRLSAL…SDLNPLAGLK (409 aa)) form an interaction with NUP116 region. Residues 463–713 (TSISTEKSDT…VSQEFTTKTQ (251 aa)) form an interaction with NSP1 and NUP159 region. Residues 582–713 (EAQNKKWDAQ…VSQEFTTKTQ (132 aa)) are a coiled coil. The Bipartite nuclear localization signal motif lies at 607-623 (KKLSQIAESNKFKEKKI).

Component of the nuclear pore complex (NPC). NPC constitutes the exclusive means of nucleocytoplasmic transport. NPCs allow the passive diffusion of ions and small molecules and the active, nuclear transport receptor-mediated bidirectional transport of macromolecules such as proteins, RNAs, ribonucleoparticles (RNPs), and ribosomal subunits across the nuclear envelope. Due to its 8-fold rotational symmetry, all subunits are present with 8 copies or multiples thereof. NUP82 is part of the NUP82 subcomplex. This subcomplex is the base for interactions with NUP116 and GLE2, with NUP42 and GLE1 and with DYN2.

It localises to the nucleus. The protein localises to the nuclear pore complex. It is found in the nucleus membrane. Functions as a component of the nuclear pore complex (NPC). NPC components, collectively referred to as nucleoporins (NUPs), can play the role of both NPC structural components and of docking or interaction partners for transiently associated nuclear transport factors. It is specifically involved as part of the NUP82-NUP159-NSP1 subcomplex in nuclear mRNA and pre-ribosome export by acting as a linker tethering nucleoporins that are directly involved in nuclear transport to the NPC via its coiled-coil domain. The protein is Nucleoporin NUP82 (NUP82) of Saccharomyces cerevisiae (strain ATCC 204508 / S288c) (Baker's yeast).